Here is a 130-residue protein sequence, read N- to C-terminus: Iron-sulfur cluster assembly 1 homolog, mitochondrial (130 aa).

The transit peptide at 1–24 (MATRVVATATVRAVKGRKLIPTRA) directs the protein to the mitochondrion. Fe cation contacts are provided by Cys58, Cys122, and Cys124.

This sequence belongs to the HesB/IscA family. As to quaternary structure, interacts with cry. Detected in head.

The protein localises to the mitochondrion. Its function is as follows. Involved in the assembly of mitochondrial iron-sulfur proteins. Probably involved in the binding of an intermediate of Fe/S cluster assembly. Required for maintenance of circadian rhythms under constant darkness. The polypeptide is Iron-sulfur cluster assembly 1 homolog, mitochondrial (Drosophila melanogaster (Fruit fly)).